The chain runs to 237 residues: Phosphoribosylaminoimidazole-succinocarboxamide synthase (237 aa).

This sequence belongs to the SAICAR synthetase family.

The enzyme catalyses 5-amino-1-(5-phospho-D-ribosyl)imidazole-4-carboxylate + L-aspartate + ATP = (2S)-2-[5-amino-1-(5-phospho-beta-D-ribosyl)imidazole-4-carboxamido]succinate + ADP + phosphate + 2 H(+). It participates in purine metabolism; IMP biosynthesis via de novo pathway; 5-amino-1-(5-phospho-D-ribosyl)imidazole-4-carboxamide from 5-amino-1-(5-phospho-D-ribosyl)imidazole-4-carboxylate: step 1/2. In Escherichia coli O127:H6 (strain E2348/69 / EPEC), this protein is Phosphoribosylaminoimidazole-succinocarboxamide synthase.